Here is a 442-residue protein sequence, read N- to C-terminus: Citrate transporter CitP (442 aa).

13 helical membrane passes run 27–47, 59–79, 83–103, 114–134, 151–171, 177–197, 209–229, 267–287, 293–313, 321–341, 349–369, 387–409, and 421–441; these read ISGI…IAIS, IFAL…LPIF, LGGG…TNVI, FING…SSLF, VAFI…VIIG, AILY…IVPL, SAGI…LAII, YVQL…GTML, GINA…FGLL, VIMF…AGVG, VLLA…IVAI, AAIT…VLAA, and MGNR…VTFM.

It belongs to the 2-hydroxycarboxylate transporter (2-HCT) (TC 2.A.24) family.

It is found in the cell membrane. The enzyme catalyses (R)-lactate(in) + citrate(out) = (R)-lactate(out) + citrate(in). The catalysed reaction is (S)-lactate(in) + citrate(out) = (S)-lactate(out) + citrate(in). It catalyses the reaction citrate(in) + H(+)(in) = citrate(out) + H(+)(out). Its activity is regulated as follows. The transport of citrate is unaffected by the presence of citrate in the growth media. Its function is as follows. Secondary transporter involved in citrate metabolism. During cometabolism of citrate and glucose, catalyzes the uptake of divalent citrate into the cell coupled to the exit of monovalent lactate, the end product of glycolysis in L.lactis. The citrate/lactate exchange is electrogenic and results in the generation of a membrane potential. Plays an important role in resistance against lactate toxicity at low pH. In the absence of glucose, i.e. when no lactate is produced, CitP catalyzes the uptake of citrate in exchange with the citrate metabolism intermediates pyruvate and alpha-acetolactate, and the end product acetate. In the absence of glucose, CitP can also catalyze the proton-dependent transport of citrate. In vitro, shows a broad substrate specificity. Can transport a wide variety of mono- and dicarboxylates of the form X-CR(2)-COO(-), where X represents OH (2-hydroxy acid), O (2-keto acid), or H (acid) and R groups differ in size, hydrophobicity and composition. Many of the substrates are intermediates or products of amino acid metabolism, suggesting that CitP may have a broader physiological function than its role in citrate metabolism. This is Citrate transporter CitP from Lactococcus lactis subsp. lactis (Streptococcus lactis).